The sequence spans 485 residues: MTIKVLSVASEAVPLVKTGGLADVAGALPSAVAPHGVGMTTILPGYPAVMKALARPRALHTWNSLLGEKARLVSGKIDGHPLLVLDAPAFFQRDGTPYVDSSGRDWADNWRRFAAFGRAAADVAGGAVKGRAFDLVHAHDWQAAMALAYLRFAPPPGGRRVPSVMTIHNMAFQGHYGADLFPALGLPPQAWAMDGVEYHGGVGYLKAGLEAASAITTVSPTYAREIRTPEFGMGLEGLVVSRGNRVSGIVNGIDTAQWNPETDPALAARFGVKSLARRVTNKRALEAEFALEADDGPLFVVITRLTWQKGIDVLLECIDHLVGIGGRLALLGSGDKAMENAFHAAATRHPGKVGVRIGYDEALSHRMQAGGDAILVPSRFEPCGLTQLYGLAYGCVPVVARTGGLADTVIDANLAAVMAGVATGVQFEGVNYPSVSDAISRAVTLYRQPDVWRAMQRAGMKTDFSWSRSGKAYADLYAALIAEDQ.

Lysine 17 is a binding site for ADP-alpha-D-glucose.

The protein belongs to the glycosyltransferase 1 family. Bacterial/plant glycogen synthase subfamily.

The catalysed reaction is [(1-&gt;4)-alpha-D-glucosyl](n) + ADP-alpha-D-glucose = [(1-&gt;4)-alpha-D-glucosyl](n+1) + ADP + H(+). It functions in the pathway glycan biosynthesis; glycogen biosynthesis. Functionally, synthesizes alpha-1,4-glucan chains using ADP-glucose. This chain is Glycogen synthase, found in Novosphingobium aromaticivorans (strain ATCC 700278 / DSM 12444 / CCUG 56034 / CIP 105152 / NBRC 16084 / F199).